The chain runs to 225 residues: Phosphoribosylformylglycinamidine synthase subunit PurQ (225 aa).

Residues 4–225 (RVGVITFPGT…YSVLDSVISA (222 aa)) form the Glutamine amidotransferase type-1 domain. Cysteine 87 (nucleophile) is an active-site residue. Residues histidine 196 and glutamate 198 contribute to the active site.

Part of the FGAM synthase complex composed of 1 PurL, 1 PurQ and 2 PurS subunits.

The protein resides in the cytoplasm. It carries out the reaction N(2)-formyl-N(1)-(5-phospho-beta-D-ribosyl)glycinamide + L-glutamine + ATP + H2O = 2-formamido-N(1)-(5-O-phospho-beta-D-ribosyl)acetamidine + L-glutamate + ADP + phosphate + H(+). The enzyme catalyses L-glutamine + H2O = L-glutamate + NH4(+). It functions in the pathway purine metabolism; IMP biosynthesis via de novo pathway; 5-amino-1-(5-phospho-D-ribosyl)imidazole from N(2)-formyl-N(1)-(5-phospho-D-ribosyl)glycinamide: step 1/2. In terms of biological role, part of the phosphoribosylformylglycinamidine synthase complex involved in the purines biosynthetic pathway. Catalyzes the ATP-dependent conversion of formylglycinamide ribonucleotide (FGAR) and glutamine to yield formylglycinamidine ribonucleotide (FGAM) and glutamate. The FGAM synthase complex is composed of three subunits. PurQ produces an ammonia molecule by converting glutamine to glutamate. PurL transfers the ammonia molecule to FGAR to form FGAM in an ATP-dependent manner. PurS interacts with PurQ and PurL and is thought to assist in the transfer of the ammonia molecule from PurQ to PurL. The chain is Phosphoribosylformylglycinamidine synthase subunit PurQ from Rhodococcus jostii (strain RHA1).